The sequence spans 231 residues: MKKVAIVQSNYIPWRGYFDLIAFVDEFIIYDDMQYTKRDWRNRNRIKTSQGLQWITVPVQVKGRFHQKIRETLIDGTDWAKAHWRALEFNYSAAAHFAEIADWLAPIYLEEQHTNLSLLNRRLLNAICSYLGISTRLANSWDYELADGKTERLANLCQQAAATEYVSGPSARSYVDERVFDELSIRVTWFDYDGYRDYKQLWGGFEPAVSILDLLFNVGAEAPDYLRYCRQ.

This is an uncharacterized protein from Mycobacterium tuberculosis (strain ATCC 25618 / H37Rv).